Reading from the N-terminus, the 57-residue chain is Large ribosomal subunit protein bL32 (57 aa).

Over residues 1-19 (MAVPKRRKSRSNTRSRRSQ) the composition is skewed to basic residues. The segment at 1-22 (MAVPKRRKSRSNTRSRRSQWKA) is disordered.

It belongs to the bacterial ribosomal protein bL32 family.

The protein is Large ribosomal subunit protein bL32 of Mycobacterium tuberculosis (strain ATCC 25177 / H37Ra).